We begin with the raw amino-acid sequence, 158 residues long: Ribosome maturation factor RimP (158 aa).

Belongs to the RimP family.

Its subcellular location is the cytoplasm. Its function is as follows. Required for maturation of 30S ribosomal subunits. The sequence is that of Ribosome maturation factor RimP from Aquifex aeolicus (strain VF5).